The sequence spans 398 residues: Enolase (398 aa).

(2R)-2-phosphoglycerate is bound at residue glutamine 154. Glutamate 196 acts as the Proton donor in catalysis. Aspartate 232, glutamate 273, and aspartate 300 together coordinate Mg(2+). Lysine 325, arginine 354, serine 355, and lysine 376 together coordinate (2R)-2-phosphoglycerate. Lysine 325 acts as the Proton acceptor in catalysis.

This sequence belongs to the enolase family. Mg(2+) serves as cofactor.

It is found in the cytoplasm. It localises to the secreted. The protein resides in the cell surface. The catalysed reaction is (2R)-2-phosphoglycerate = phosphoenolpyruvate + H2O. The protein operates within carbohydrate degradation; glycolysis; pyruvate from D-glyceraldehyde 3-phosphate: step 4/5. In terms of biological role, catalyzes the reversible conversion of 2-phosphoglycerate (2-PG) into phosphoenolpyruvate (PEP). It is essential for the degradation of carbohydrates via glycolysis. In Halobacterium salinarum (strain ATCC 700922 / JCM 11081 / NRC-1) (Halobacterium halobium), this protein is Enolase.